The primary structure comprises 336 residues: MKTLMRHGLAVCLVLTTMCTSLLLVYSSLGSQKERPPQQQQQQQQQQQQAATATGSTQLVESSPQPRRTAPAGPRQLEGYLGVADHKPLKMHCKDCALVTSSGHLLRSQQGPHIDQTECVIRMNDAPTRGYGLDVGNRTSLRVIAHSSIQRILRNRHDLLNVSQGTVFIFWGPSSYMRRDGKGQAYNNLQLLSQVLPRLKAFMITRHRMLQFDELFKQETGKDRKISNTWLSTGWFTMTIALELCDRIDVYGMVPPDFCRDPKHPSVPYHYYEPSGPDECTMYLSHERGRKGSHHRFITEKRVFKNWARTFNIHFFQPDWKPESPAVNHAEGKPVF.

Residues 1–8 (MKTLMRHG) lie on the Cytoplasmic side of the membrane. Residues 9 to 29 (LAVCLVLTTMCTSLLLVYSSL) form a helical; Signal-anchor for type II membrane protein membrane-spanning segment. The Lumenal portion of the chain corresponds to 30–336 (GSQKERPPQQ…VNHAEGKPVF (307 aa)). The disordered stretch occupies residues 34 to 76 (ERPPQQQQQQQQQQQQAATATGSTQLVESSPQPRRTAPAGPRQ). The span at 38–49 (QQQQQQQQQQQQ) shows a compositional bias: low complexity. Polar residues predominate over residues 50–66 (AATATGSTQLVESSPQP). Cys-96 and Cys-245 are disulfide-bonded. Residues Asn-137 and Asn-161 are each glycosylated (N-linked (GlcNAc...) asparagine).

Belongs to the glycosyltransferase 29 family. As to expression, high expression in forebrain and to a lesser extent in cerebellum. No expression in salivary gland, intestine, liver, kidney, heart, lung, thymus and spleen.

The protein localises to the golgi apparatus membrane. It catalyses the reaction a ganglioside GM1b (d18:1(4E)) + CMP-N-acetyl-beta-neuraminate = a ganglioside GD1alpha (d18:1(4E)) + CMP + H(+). It carries out the reaction N-acetyl-alpha-neuraminosyl-(2-&gt;3)-beta-D-galactosyl-(1-&gt;3)-N-acetyl-beta-D-glucosaminyl-(1-&gt;3)-beta-D-galactosyl-(1-&gt;4)-beta-D-glucosyl-(1&lt;-&gt;1')-N-acyl-sphing-4-enine + CMP-N-acetyl-beta-neuraminate = N-acetyl-alpha-neuraminosyl-(2-&gt;3)-beta-D-galactosyl-(1-&gt;3)-[N-acetyl-alpha-neuraminosyl-(2-&gt;6)]-N-acetyl-beta-D-glucosaminyl-(1-&gt;3)-beta-D-galactosyl-(1-&gt;4)-beta-D-glucosyl-(1&lt;-&gt;1')-N-acyl-sphing-4-enine + CMP + H(+). Its pathway is glycolipid biosynthesis. In terms of biological role, predominantly catalyzes the biosynthesis of ganglioside GD1alpha from GM1b in the brain, by transferring the sialyl group (N-acetyl-alpha-neuraminyl or NeuAc) from CMP-NeuAc to the GalNAc residue on the NeuAc-alpha-2,3-Gal-beta-1,3-GalNAc sequence of GM1b. GD1alpha is a critical molecule in the communication and interaction between neuronal cells and their supportive cells, particularly in brain tissues, and functions as an adhesion molecule in the process of metastasis. Also shows activity towards sialyl Lc4Cer (N-acetyl-alpha-neuraminosyl-(2-&gt;3)-beta-D-galactosyl-(1-&gt;3)-N-acetyl-beta-D-glucosaminyl-(1-&gt;3)-beta-D-galactosyl-(1-&gt;4)-beta-D-glucosyl-(1&lt;-&gt;1')-N-acyl-sphing-4-enine) generating disialyl Lc4Cer, which can lead to the synthesis of disialyl Lewis a (Le(a)), suggested to be a cancer-associated antigen. This chain is Alpha-N-acetylgalactosaminide alpha-2,6-sialyltransferase 5 (St6galnac5), found in Mus musculus (Mouse).